The sequence spans 180 residues: Large ribosomal subunit protein uL5 (180 aa).

It belongs to the universal ribosomal protein uL5 family. Part of the 50S ribosomal subunit; part of the 5S rRNA/L5/L18/L25 subcomplex. Contacts the 5S rRNA and the P site tRNA. Forms a bridge to the 30S subunit in the 70S ribosome.

In terms of biological role, this is one of the proteins that bind and probably mediate the attachment of the 5S RNA into the large ribosomal subunit, where it forms part of the central protuberance. In the 70S ribosome it contacts protein S13 of the 30S subunit (bridge B1b), connecting the 2 subunits; this bridge is implicated in subunit movement. Contacts the P site tRNA; the 5S rRNA and some of its associated proteins might help stabilize positioning of ribosome-bound tRNAs. This Streptococcus equi subsp. equi (strain 4047) protein is Large ribosomal subunit protein uL5.